We begin with the raw amino-acid sequence, 210 residues long: Uridine kinase (210 aa).

Gly12–Thr19 contacts ATP.

Belongs to the uridine kinase family.

The protein resides in the cytoplasm. It catalyses the reaction uridine + ATP = UMP + ADP + H(+). It carries out the reaction cytidine + ATP = CMP + ADP + H(+). The protein operates within pyrimidine metabolism; CTP biosynthesis via salvage pathway; CTP from cytidine: step 1/3. Its pathway is pyrimidine metabolism; UMP biosynthesis via salvage pathway; UMP from uridine: step 1/1. The polypeptide is Uridine kinase (Streptococcus gordonii (strain Challis / ATCC 35105 / BCRC 15272 / CH1 / DL1 / V288)).